The primary structure comprises 213 residues: ATP phosphoribosyltransferase (213 aa).

Belongs to the ATP phosphoribosyltransferase family. Short subfamily. In terms of assembly, heteromultimer composed of HisG and HisZ subunits.

Its subcellular location is the cytoplasm. It carries out the reaction 1-(5-phospho-beta-D-ribosyl)-ATP + diphosphate = 5-phospho-alpha-D-ribose 1-diphosphate + ATP. It functions in the pathway amino-acid biosynthesis; L-histidine biosynthesis; L-histidine from 5-phospho-alpha-D-ribose 1-diphosphate: step 1/9. In terms of biological role, catalyzes the condensation of ATP and 5-phosphoribose 1-diphosphate to form N'-(5'-phosphoribosyl)-ATP (PR-ATP). Has a crucial role in the pathway because the rate of histidine biosynthesis seems to be controlled primarily by regulation of HisG enzymatic activity. This is ATP phosphoribosyltransferase from Anoxybacillus flavithermus (strain DSM 21510 / WK1).